The primary structure comprises 807 residues: Protein FAR1-RELATED SEQUENCE 2 (807 aa).

The FAR1 domain occupies 52–138 (YFYREYARSV…VKEHNHEICP (87 aa)). An MULE domain is found at 219–315 (VVLFDTFYVR…CLWSVLSKIS (97 aa)). The SWIM-type zinc-finger motif lies at 499-535 (FFVALNNELLDACCSCHLFEYQGFLCKHAILVLQSAD). The stretch at 660 to 680 (EDATNRSEELRQETEQVSSRA) forms a coiled coil. Residues 788-798 (GSSQFQGSDSS) are compositionally biased toward polar residues. A disordered region spans residues 788–807 (GSSQFQGSDSSHPSDHRLSN).

Belongs to the FHY3/FAR1 family. As to expression, expressed in hypocotyls, rosette and cauline leaves, inflorescences stems, flowers and siliques.

It localises to the nucleus. Its function is as follows. Putative transcription activator involved in regulating light control of development. This is Protein FAR1-RELATED SEQUENCE 2 (FRS2) from Arabidopsis thaliana (Mouse-ear cress).